The sequence spans 113 residues: Hydrogenase maturation factor HypA (113 aa).

Histidine 2 serves as a coordination point for Ni(2+). Residues cysteine 73, cysteine 76, cysteine 89, and cysteine 92 each contribute to the Zn(2+) site.

It belongs to the HypA/HybF family.

Its function is as follows. Involved in the maturation of [NiFe] hydrogenases. Required for nickel insertion into the metal center of the hydrogenase. This is Hydrogenase maturation factor HypA from Picosynechococcus sp. (strain ATCC 27264 / PCC 7002 / PR-6) (Agmenellum quadruplicatum).